We begin with the raw amino-acid sequence, 283 residues long: Phosphate import ATP-binding protein PstB (283 aa).

Residues 1–20 (MAQTLAQTKQISQSHTFDVS) are compositionally biased toward polar residues. The tract at residues 1–33 (MAQTLAQTKQISQSHTFDVSQSHHKTPNDTNSH) is disordered. In terms of domain architecture, ABC transporter spans 37-278 (YSTQNLDLWY…PSNKKTEDYI (242 aa)). 69–76 (GPSGCGKS) serves as a coordination point for ATP.

The protein belongs to the ABC transporter superfamily. Phosphate importer (TC 3.A.1.7) family. As to quaternary structure, the complex is composed of two ATP-binding proteins (PstB), two transmembrane proteins (PstC and PstA) and a solute-binding protein (PstS).

It localises to the cell membrane. It catalyses the reaction phosphate(out) + ATP + H2O = ADP + 2 phosphate(in) + H(+). Its function is as follows. Part of the ABC transporter complex PstSACB involved in phosphate import. Responsible for energy coupling to the transport system. The chain is Phosphate import ATP-binding protein PstB from Staphylococcus aureus (strain bovine RF122 / ET3-1).